An 892-amino-acid chain; its full sequence is Dipeptidyl peptidase 8 (892 aa).

Residues Ser749, Asp827, and His859 each act as charge relay system in the active site.

This sequence belongs to the peptidase S9B family. DPPIV subfamily. Homodimer. Forms a ternary complex with NLRP1, composed of a DPP8 homodimer, one full-length NLRP1 protein, and one cleaved C-terminus of NLRP1 (NACHT, LRR and PYD domains-containing protein 1, C-terminus). Forms a ternary complex with CARD8, composed of a DPP8 homodimer, one full-length NLRP1 protein, and one cleaved C-terminus of CARD8 (Caspase recruitment domain-containing protein 8, C-terminus). In the ternary complex, only one subunit of the DPP8 homodimer is bound to NLRP1 or CARD8.

The protein resides in the cytoplasm. It catalyses the reaction Release of an N-terminal dipeptide, Xaa-Yaa-|-Zaa-, from a polypeptide, preferentially when Yaa is Pro, provided Zaa is neither Pro nor hydroxyproline.. Inhibited by zinc. Inhibited by the serine proteinase inhibitor 4-(2-aminoethyl)benzenesulphonyl fluoride (AEBSF), and by di-isopropylfluorophosphate. Specifically inhibited by isoindoline derivatives. Inhibited by Val-boroPro (Talabostat, PT-100), a non-selective inhibitor, which triggers pyroptosis in monocytes and macrophages. Dipeptidyl peptidase that cleaves off N-terminal dipeptides from proteins having a Pro or Ala residue at position 2. Acts as a key inhibitor of caspase-1-dependent monocyte and macrophage pyroptosis in resting cells by preventing activation of NLRP1 and CARD8. Sequesters the cleaved C-terminal part of NLRP1 and CARD8, which respectively constitute the active part of the NLRP1 and CARD8 inflammasomes, in a ternary complex, thereby preventing their oligomerization and activation. The dipeptidyl peptidase activity is required to suppress NLRP1 and CARD8; however, neither NLRP1 nor CARD8 are bona fide substrates of DPP8, suggesting the existence of substrate(s) required for NLRP1 and CARD8 inhibition. This chain is Dipeptidyl peptidase 8, found in Mus musculus (Mouse).